The chain runs to 369 residues: MATLDVNPQRYQQQLAEKVQRLTDMFAPYQAPELEVFESPEQHYRMRAEFRVWHEGEEMYYIMFNQETREKYRVDQFPAASRLINDLMPLLIDAMKDNESLRRKLFQVDFLSTLSGEILVSLLYHRQLDDAWIENAKALKQRLNDEGFDLNLIGRARKMKIVLDRDYVVEKLDVNGKPYVYQQVENSFTQPNGKVAEKMLEWAVDCTQESQGDLLELYCGNGNFSLALAQNFERVLATELAKPSVESAQYNIAANKIENVQIIRMSAEEFTEAMEGKREFRRLKDNGIDLKSYNCNTIFVDPPRSGMDVDTCKMVQGYERILYISCNPETLKENLDILSETHHITRFALFDQFPYTHHMEAGVMLERKA.

S-adenosyl-L-methionine is bound by residues glutamine 190, tyrosine 218, asparagine 223, glutamate 239, and aspartate 301. Cysteine 326 (nucleophile) is an active-site residue. The Proton acceptor role is filled by glutamate 360.

It belongs to the class I-like SAM-binding methyltransferase superfamily. RNA M5U methyltransferase family. TrmA subfamily.

It catalyses the reaction uridine(54) in tRNA + S-adenosyl-L-methionine = 5-methyluridine(54) in tRNA + S-adenosyl-L-homocysteine + H(+). The enzyme catalyses uridine(341) in tmRNA + S-adenosyl-L-methionine = 5-methyluridine(341) in tmRNA + S-adenosyl-L-homocysteine + H(+). Its function is as follows. Dual-specificity methyltransferase that catalyzes the formation of 5-methyluridine at position 54 (m5U54) in all tRNAs, and that of position 341 (m5U341) in tmRNA (transfer-mRNA). This chain is tRNA/tmRNA (uracil-C(5))-methyltransferase, found in Vibrio vulnificus (strain YJ016).